We begin with the raw amino-acid sequence, 347 residues long: Galactoside alpha-(1,2)-fucosyltransferase 2 (347 aa).

Residues M1–Q5 are Cytoplasmic-facing. Residues V6 to I26 form a helical; Signal-anchor for type II membrane protein membrane-spanning segment. Topologically, residues H27–H347 are lumenal. N192, N258, N286, and N312 each carry an N-linked (GlcNAc...) asparagine glycan.

It belongs to the glycosyltransferase 11 family. As to expression, expressed in stomach, colon, ovary and uterus, specifically in luminal uterine epithelium. Expressed in various tissues including heart, liver, kidney, testis, epididymis, small intestine,and cecum. Expressed in duodenum, jejunum and ileum.

Its subcellular location is the golgi apparatus. It localises to the golgi stack membrane. The enzyme catalyses a beta-D-galactosyl-(1-&gt;3)-N-acetyl-beta-D-glucosaminyl derivative + GDP-beta-L-fucose = an alpha-L-Fuc-(1-&gt;2)-beta-D-Gal-(1-&gt;3)-beta-D-GlcNAc derivative + GDP + H(+). It carries out the reaction a beta-D-galactosyl-(1-&gt;4)-N-acetyl-beta-D-glucosaminyl derivative + GDP-beta-L-fucose = an alpha-L-Fuc-(1-&gt;2)-beta-D-Gal-(1-&gt;4)-beta-D-GlcNAc derivative + GDP + H(+). The catalysed reaction is a neolactoside nLc4Cer + GDP-beta-L-fucose = a neolactoside IV(2)-alpha-Fuc-nLc4Cer + GDP + H(+). It catalyses the reaction a neolactoside nLc4Cer(d18:1(4E)) + GDP-beta-L-fucose = a neolactoside IV(2)-alpha-Fuc-nLc4Cer(d18:1(4E)) + GDP + H(+). The enzyme catalyses a ganglioside GM1 + GDP-beta-L-fucose = a ganglioside Fuc-GM1 + GDP + H(+). It carries out the reaction a ganglioside GA1 + GDP-beta-L-fucose = a ganglioside Fuc-GA1 + GDP + H(+). The catalysed reaction is Lc4Cer + GDP-beta-L-fucose = alpha-L-fucosyl-(1-&gt;2)-beta-D-galactosyl-(1-&gt;3)-N-acetyl-beta-D-glucosaminyl-(1-&gt;3)-beta-D-galactosyl-(1-&gt;4)-beta-D-glucosyl-(1&lt;-&gt;1')-ceramide + GDP + H(+). It catalyses the reaction a beta-D-Gal-(1-&gt;3)-beta-D-GlcNAc-(1-&gt;3)-beta-D-Gal-(1-&gt;4)-beta-D-Glc-(1&lt;-&gt;1')-Cer(d18:1(4E)) + GDP-beta-L-fucose = alpha-L-fucosyl-(1-&gt;2)- beta-D-galactosyl-(1-&gt;3)-N-acetyl-beta-D-glucosaminyl-(1-&gt;3)-beta-D-galactosyl-(1-&gt;4)-beta-D-glucosyl-(1&lt;-&gt;1')-N-acylsphing-4-enine + GDP + H(+). The enzyme catalyses a ganglioside GD1b + GDP-beta-L-fucose = a ganglioside Fuc-GD1b + GDP + H(+). It carries out the reaction a ganglioside GM1 (d18:1(4E)) + GDP-beta-L-fucose = a ganglioside Fuc-GM1 (d18:1(4E)) + GDP + H(+). The catalysed reaction is a globoside GalGb4Cer (d18:1(4E)) + GDP-beta-L-fucose = a globoside Globo-H (d18:1(4E)) + GDP + H(+). It catalyses the reaction a lactoside III(4)-a-Fuc-Lc4Cer + GDP-beta-L-fucose = a lactoside IV(2),III(4)-a-[Fuc]2-Lc4Cer + GDP + H(+). The enzyme catalyses beta-D-galactosyl-(1-&gt;3)-N-acetyl-D-galactosamine + GDP-beta-L-fucose = alpha-L-fucosyl-(1-&gt;2)-beta-D-galactosyl-(1-&gt;3)-N-acetyl-D-galactosamine + GDP + H(+). The protein operates within protein modification; protein glycosylation. Its function is as follows. Catalyzes the transfer of L-fucose, from a guanosine diphosphate-beta-L-fucose, to the terminal galactose on both O- and N-linked glycans chains of cell surface glycoproteins and glycolipids and the resulting epitope regulates several processes such as cell-cell interaction including host-microbe interaction, cell surface expression and cell proliferation. Preferentially fucosylates gangliosides GA1 and GM1 in the antrum, cecum and colon and in the female reproductive organs. Fucosylated host glycoproteins or glycolipids mediate interaction with intestinal microbiota influencing its composition. Creates a soluble precursor oligosaccharide FuC-alpha ((1,2)Galbeta-) called the H antigen which is an essential substrate for the final step in the soluble ABO blood group antigen synthesis pathway. The chain is Galactoside alpha-(1,2)-fucosyltransferase 2 from Mus musculus (Mouse).